The sequence spans 273 residues: Ribosomal RNA small subunit methyltransferase A (273 aa).

The S-adenosyl-L-methionine site is built by H10, L12, G37, E58, D83, and N108.

Belongs to the class I-like SAM-binding methyltransferase superfamily. rRNA adenine N(6)-methyltransferase family. RsmA subfamily.

It is found in the cytoplasm. It catalyses the reaction adenosine(1518)/adenosine(1519) in 16S rRNA + 4 S-adenosyl-L-methionine = N(6)-dimethyladenosine(1518)/N(6)-dimethyladenosine(1519) in 16S rRNA + 4 S-adenosyl-L-homocysteine + 4 H(+). Functionally, specifically dimethylates two adjacent adenosines (A1518 and A1519) in the loop of a conserved hairpin near the 3'-end of 16S rRNA in the 30S particle. May play a critical role in biogenesis of 30S subunits. The sequence is that of Ribosomal RNA small subunit methyltransferase A from Picosynechococcus sp. (strain ATCC 27264 / PCC 7002 / PR-6) (Agmenellum quadruplicatum).